We begin with the raw amino-acid sequence, 707 residues long: DNA ligase (707 aa).

Residues 1 to 23 (MSSKATQDPEAVLAEQSDDATEA) form a disordered region. Residues 53-57 (DAEFD), 103-104 (SL), and E133 each bind NAD(+). Residue K135 is the N6-AMP-lysine intermediate of the active site. NAD(+) contacts are provided by R156, E196, K315, and K339. Zn(2+) contacts are provided by C433, C436, C452, and C458. Positions 622–707 (SIERTLDGLS…LENGPDTPDS (86 aa)) constitute a BRCT domain.

It belongs to the NAD-dependent DNA ligase family. LigA subfamily. The cofactor is Mg(2+). Requires Mn(2+) as cofactor.

It catalyses the reaction NAD(+) + (deoxyribonucleotide)n-3'-hydroxyl + 5'-phospho-(deoxyribonucleotide)m = (deoxyribonucleotide)n+m + AMP + beta-nicotinamide D-nucleotide.. Its function is as follows. DNA ligase that catalyzes the formation of phosphodiester linkages between 5'-phosphoryl and 3'-hydroxyl groups in double-stranded DNA using NAD as a coenzyme and as the energy source for the reaction. It is essential for DNA replication and repair of damaged DNA. This Mycolicibacterium vanbaalenii (strain DSM 7251 / JCM 13017 / BCRC 16820 / KCTC 9966 / NRRL B-24157 / PYR-1) (Mycobacterium vanbaalenii) protein is DNA ligase.